A 263-amino-acid chain; its full sequence is Undecaprenyl-diphosphatase 2 (263 aa).

8 helical membrane passes run Gly15–Phe37, Ala42–Trp62, Leu83–Ile103, Val106–Val126, Ile142–Phe162, Ala183–Ile203, Leu216–Leu236, and Val242–Ile262.

This sequence belongs to the UppP family.

It is found in the cell membrane. It catalyses the reaction di-trans,octa-cis-undecaprenyl diphosphate + H2O = di-trans,octa-cis-undecaprenyl phosphate + phosphate + H(+). Its function is as follows. Catalyzes the dephosphorylation of undecaprenyl diphosphate (UPP). Confers resistance to bacitracin. This is Undecaprenyl-diphosphatase 2 from Bacillus cereus (strain ATCC 10987 / NRS 248).